Here is a 115-residue protein sequence, read N- to C-terminus: Large ribosomal subunit protein bL19 (115 aa).

This sequence belongs to the bacterial ribosomal protein bL19 family.

In terms of biological role, this protein is located at the 30S-50S ribosomal subunit interface and may play a role in the structure and function of the aminoacyl-tRNA binding site. In Buchnera aphidicola subsp. Acyrthosiphon pisum (strain APS) (Acyrthosiphon pisum symbiotic bacterium), this protein is Large ribosomal subunit protein bL19 (rplS).